A 268-amino-acid polypeptide reads, in one-letter code: Ribosomal RNA large subunit methyltransferase E (268 aa).

The interval 1-60 (MKPPRSRSGSSKDTGPKRIPGKALKSASNPGENDATLDSATARTARNKTVSLRTARGRTT) is disordered. The segment covering 26–52 (SASNPGENDATLDSATARTARNKTVSL) has biased composition (polar residues). Residues G115, W117, D133, D149, and D173 each coordinate S-adenosyl-L-methionine. The active-site Proton acceptor is the K213.

This sequence belongs to the class I-like SAM-binding methyltransferase superfamily. RNA methyltransferase RlmE family.

It localises to the cytoplasm. It catalyses the reaction uridine(2552) in 23S rRNA + S-adenosyl-L-methionine = 2'-O-methyluridine(2552) in 23S rRNA + S-adenosyl-L-homocysteine + H(+). In terms of biological role, specifically methylates the uridine in position 2552 of 23S rRNA at the 2'-O position of the ribose in the fully assembled 50S ribosomal subunit. The protein is Ribosomal RNA large subunit methyltransferase E of Gluconobacter oxydans (strain 621H) (Gluconobacter suboxydans).